A 163-amino-acid chain; its full sequence is Probable protein tyrosine phosphatase type IVA B (163 aa).

The Tyrosine-protein phosphatase domain maps to 10–161 (TIIESSTHKF…YKASKKAGCK (152 aa)). C49 and C104 are disulfide-bonded. The active-site Proton donor is D70. The Phosphocysteine intermediate role is filled by C104. 105–110 (IAGLGR) provides a ligand contact to phosphate. R110 lines the substrate pocket. C160 carries the post-translational modification Cysteine methyl ester. C160 carries S-farnesyl cysteine lipidation. The propeptide at 161–163 (KIM) is removed in mature form.

This sequence belongs to the protein-tyrosine phosphatase family.

Its subcellular location is the membrane. It catalyses the reaction O-phospho-L-tyrosyl-[protein] + H2O = L-tyrosyl-[protein] + phosphate. In Dictyostelium discoideum (Social amoeba), this protein is Probable protein tyrosine phosphatase type IVA B.